The sequence spans 811 residues: Leucine--tRNA ligase (811 aa).

A 'HIGH' region motif is present at residues S38–H49. The short motif at K570–S574 is the 'KMSKS' region element. K573 provides a ligand contact to ATP.

It belongs to the class-I aminoacyl-tRNA synthetase family.

The protein localises to the cytoplasm. It catalyses the reaction tRNA(Leu) + L-leucine + ATP = L-leucyl-tRNA(Leu) + AMP + diphosphate. The polypeptide is Leucine--tRNA ligase (Clostridium kluyveri (strain ATCC 8527 / DSM 555 / NBRC 12016 / NCIMB 10680 / K1)).